A 116-amino-acid polypeptide reads, in one-letter code: Nitrogen regulatory PII-like protein (116 aa).

The protein belongs to the P(II) protein family. Needs to interact with NrgA in order to localize correctly to the membrane.

The protein resides in the cell membrane. Its function is as follows. Required for full induction of the nrgAB operon under conditions of ammonium limitation. The chain is Nitrogen regulatory PII-like protein (nrgB) from Bacillus subtilis (strain 168).